The sequence spans 125 residues: Large ribosomal subunit protein bL12 (125 aa).

Belongs to the bacterial ribosomal protein bL12 family. As to quaternary structure, homodimer. Part of the ribosomal stalk of the 50S ribosomal subunit. Forms a multimeric L10(L12)X complex, where L10 forms an elongated spine to which 2 to 4 L12 dimers bind in a sequential fashion. Binds GTP-bound translation factors.

In terms of biological role, forms part of the ribosomal stalk which helps the ribosome interact with GTP-bound translation factors. Is thus essential for accurate translation. The polypeptide is Large ribosomal subunit protein bL12 (Rhizobium leguminosarum bv. trifolii (strain WSM2304)).